A 389-amino-acid polypeptide reads, in one-letter code: S-adenosylmethionine synthase (389 aa).

Histidine 17 contacts ATP. Aspartate 19 serves as a coordination point for Mg(2+). Glutamate 45 lines the K(+) pocket. 2 residues coordinate L-methionine: glutamate 58 and glutamine 101. The tract at residues 101-111 is flexible loop; that stretch reads QSPDIGQGVDV. ATP contacts are provided by residues 160–162, 226–227, aspartate 235, 241–242, alanine 258, and lysine 262; these read DGK, RF, and RK. L-methionine is bound at residue aspartate 235. Lysine 266 lines the L-methionine pocket.

It belongs to the AdoMet synthase family. In terms of assembly, homotetramer; dimer of dimers. Mg(2+) is required as a cofactor. It depends on K(+) as a cofactor.

It localises to the cytoplasm. It catalyses the reaction L-methionine + ATP + H2O = S-adenosyl-L-methionine + phosphate + diphosphate. It functions in the pathway amino-acid biosynthesis; S-adenosyl-L-methionine biosynthesis; S-adenosyl-L-methionine from L-methionine: step 1/1. Functionally, catalyzes the formation of S-adenosylmethionine (AdoMet) from methionine and ATP. The overall synthetic reaction is composed of two sequential steps, AdoMet formation and the subsequent tripolyphosphate hydrolysis which occurs prior to release of AdoMet from the enzyme. In Anaeromyxobacter sp. (strain Fw109-5), this protein is S-adenosylmethionine synthase.